The chain runs to 268 residues: uncharacterized protein (268 aa).

A coiled-coil region spans residues 132 to 159 (DELDEKIIEFDTKMNEILEELLEDVEVE).

This is an uncharacterized protein from Methanocaldococcus jannaschii (strain ATCC 43067 / DSM 2661 / JAL-1 / JCM 10045 / NBRC 100440) (Methanococcus jannaschii).